A 970-amino-acid polypeptide reads, in one-letter code: Sodium/calcium exchanger 1 (970 aa).

The N-terminal stretch at methionine 1–alanine 32 is a signal peptide. The Extracellular segment spans residues aspartate 33 to lysine 71. An N-linked (GlcNAc...) asparagine glycan is attached at asparagine 41. The helical transmembrane segment at isoleucine 72–isoleucine 92 threads the bilayer. The Cytoplasmic portion of the chain corresponds to alanine 93–asparagine 133. The chain crosses the membrane as a helical span at residues leucine 134–cysteine 154. One copy of the Alpha-1 repeat lies at alanine 138 to isoleucine 178. The Extracellular segment spans residues glycine 155–threonine 167. Asparagine 157 is a glycosylation site (N-linked (GlcNAc...) asparagine). A helical transmembrane segment spans residues isoleucine 168–proline 188. The Cytoplasmic portion of the chain corresponds to aspartate 189–phenylalanine 201. Residues phenylalanine 202–isoleucine 222 form a helical membrane-spanning segment. The Extracellular segment spans residues serine 223 to glutamate 228. A helical transmembrane segment spans residues valine 229–alanine 249. At aspartate 250–glycine 797 the chain is on the cytoplasmic side. Positions arginine 251–glycine 270 are putative calmodulin-binding region. A phosphoserine mark is found at serine 282 and serine 389. 2 consecutive Calx-beta domains span residues valine 393–serine 493 and alanine 524–glycine 624. Ca(2+) is bound by residues glutamate 417, aspartate 453, aspartate 478, aspartate 479, isoleucine 481, glutamate 483, glutamate 486, aspartate 530, aspartate 531, aspartate 532, glutamate 548, aspartate 584, aspartate 610, glutamate 611, glutamate 612, and glutamate 715. A helical transmembrane segment spans residues tryptophan 798–leucine 818. Topologically, residues alanine 819–histidine 821 are extracellular. The helical transmembrane segment at phenylalanine 822 to threonine 842 threads the bilayer. One copy of the Alpha-2 repeat lies at alanine 839–valine 875. The Cytoplasmic portion of the chain corresponds to serine 843–asparagine 871. Residues alanine 872–alanine 892 form a helical membrane-spanning segment. The Extracellular segment spans residues asparagine 893 to threonine 903. A helical transmembrane segment spans residues leucine 904–tyrosine 924. Residues arginine 925–lysine 941 are Cytoplasmic-facing. The chain crosses the membrane as a helical span at residues leucine 942–glutamate 962. Over alanine 963–phenylalanine 970 the chain is Extracellular.

Belongs to the Ca(2+):cation antiporter (CaCA) (TC 2.A.19) family. SLC8 subfamily. As to expression, detected in heart (at protein level). Detected in heart.

Its subcellular location is the cell membrane. It catalyses the reaction Ca(2+)(in) + 3 Na(+)(out) = Ca(2+)(out) + 3 Na(+)(in). Activated by micromolar levels of Ca(2+). In terms of biological role, mediates the exchange of one Ca(2+) ion against three to four Na(+) ions across the cell membrane, and thereby contributes to the regulation of cytoplasmic Ca(2+) levels and Ca(2+)-dependent cellular processes. Contributes to Ca(2+) transport during excitation-contraction coupling in muscle. In a first phase, voltage-gated channels mediate the rapid increase of cytoplasmic Ca(2+) levels due to release of Ca(2+) stores from the endoplasmic reticulum. SLC8A1 mediates the export of Ca(2+) from the cell during the next phase, so that cytoplasmic Ca(2+) levels rapidly return to baseline. Required for normal embryonic heart development and the onset of heart contractions. The protein is Sodium/calcium exchanger 1 (SLC8A1) of Felis catus (Cat).